The following is a 269-amino-acid chain: Protein UL24 (269 aa).

Residues 191 to 244 form a disordered region; sequence IEPRTQRARRRRGGAARGSASRPKRSHSGARDPPESAARQLPPADQTPTSTEGG.

Belongs to the herpesviridae UL24 family.

It localises to the virion. The protein localises to the host cytoplasm. It is found in the host nucleus. The protein resides in the host nucleolus. Its subcellular location is the host Golgi apparatus. In terms of biological role, may participate in nuclear egress of viral particles. Plays a role in the dispersal of several host nucleolar proteins including NCL/nucleolin and NPM1. Since deletion of host NCL/nucleolin negatively impact on nuclear egress, UL24 supposedly acts on this process through its effect on host nucleoli. This Homo sapiens (Human) protein is Protein UL24.